Consider the following 431-residue polypeptide: Tol-Pal system protein TolB (431 aa).

Residues 1-26 (MSLMTKLGFRALVASCLIAAGSAANA) form the signal peptide. The tract at residues 411–431 (PQILSVQGGSVREPSWGPFMQ) is disordered.

This sequence belongs to the TolB family. The Tol-Pal system is composed of five core proteins: the inner membrane proteins TolA, TolQ and TolR, the periplasmic protein TolB and the outer membrane protein Pal. They form a network linking the inner and outer membranes and the peptidoglycan layer.

Its subcellular location is the periplasm. Part of the Tol-Pal system, which plays a role in outer membrane invagination during cell division and is important for maintaining outer membrane integrity. The chain is Tol-Pal system protein TolB from Burkholderia multivorans (strain ATCC 17616 / 249).